Reading from the N-terminus, the 201-residue chain is Probable quinol oxidase subunit 3 (201 aa).

The next 5 membrane-spanning stretches (helical) occupy residues 20–40 (LGFW…FATL), 62–82 (LILI…IAIY), 91–111 (LMMF…GFEI), 133–153 (FFIL…WVIC), and 172–192 (FIVS…FTAV).

The protein belongs to the cytochrome c oxidase subunit 3 family.

It is found in the cell membrane. The catalysed reaction is 2 a quinol + O2 = 2 a quinone + 2 H2O. Functionally, catalyzes quinol oxidation with the concomitant reduction of oxygen to water. This chain is Probable quinol oxidase subunit 3 (qoxC), found in Staphylococcus epidermidis (strain ATCC 35984 / DSM 28319 / BCRC 17069 / CCUG 31568 / BM 3577 / RP62A).